Here is a 97-residue protein sequence, read N- to C-terminus: Theromacin (97 aa).

An N-terminal signal peptide occupies residues 1–22 (MELKSGLSILLCFGICIAVINA). Disulfide bonds link Cys24–Cys31, Cys46–Cys50, Cys53–Cys95, Cys61–Cys69, and Cys79–Cys81.

Coelomic liquid (at protein level). Expressed in large fat cells in contact with coelomic cavities, in intestinal epithelia and at the epidermis level.

It localises to the secreted. Has a bactericidal activity. Active against M.luteus. No activity toward E.coli and F.oxysporum. The chain is Theromacin from Theromyzon tessulatum (Duck leech).